The chain runs to 322 residues: Epiphycan (322 aa).

A signal peptide spans 1–19; that stretch reads MGMLARVALGLIIIDAVLA. Residues 58-108 are disordered; it reads KVSERLSGNRELLTPGPQLGDNQDEDKDEESTPRLIDGSSPQEPEFPGLLG. S64 carries an O-linked (Xyl...) (dermatan sulfate) serine glycan. O-linked (GalNAc...) serine glycosylation is present at S96. The 38-residue stretch at 106-143 folds into the LRRNT domain; it reads LLGPHTNEDFPTCLLCTCISTTVYCDDHELDAIPPLPK. Residues C118 and C130 are joined by a disulfide bond. LRR repeat units follow at residues 144-165, 168-189, 192-213, 238-258, and 259-280; these read KTTY…DFAS, DLKR…AFRK, HLQE…PNTL, DLHH…PLPE, and SLRA…TFCN. An intrachain disulfide couples C279 to C312. N283 and N302 each carry an N-linked (GlcNAc...) asparagine glycan. One copy of the LRR 6 repeat lies at 290–310; that stretch reads ALEDIRLDGNPINLSRTPQAY.

Belongs to the small leucine-rich proteoglycan (SLRP) family. SLRP class III subfamily. The O-linked polysaccharide on Ser-96 is probably the mucin type linked to GalNAc. There is one glycosaminoglycan chain, known to be dermatan sulfate, and it is probably the O-glycosylation at Ser-64. In terms of tissue distribution, confined to the middle zone of embryonic epiphyseal cartilage consisting of flattened chondrocytes and the ossifying region in the limb buds of chick embryos. Has also been detected in testis.

The protein localises to the secreted. It localises to the extracellular space. The protein resides in the extracellular matrix. Functionally, may have a role in bone formation and also in establishing the ordered structure of cartilage through matrix organization. This Mus musculus (Mouse) protein is Epiphycan (Epyc).